An 814-amino-acid chain; its full sequence is ATP-dependent RNA helicase dbp-7 (814 aa).

Residues 26–102 are disordered; sequence GGRWRDRVKA…PPPPPTHAMK (77 aa). 2 stretches are compositionally biased toward basic and acidic residues: residues 28 to 42 and 69 to 78; these read RWRD…EKGG and QRTEDGDSGR. The short motif at 145–174 is the Q motif element; that stretch reads ENFLSLGLSRRVSQHLATKLEMKAPTAIQK. The 207-residue stretch at 178 to 384 folds into the Helicase ATP-binding domain; sequence PQLVKEDSDA…EISLEDAVHI (207 aa). Residue 191-198 coordinates ATP; it reads AETGSGKT. Positions 313–316 match the DEAD box motif; it reads DEGD. Residues 422–622 enclose the Helicase C-terminal domain; it reads RLVTLIALLK…GFATNINVPG (201 aa). Disordered stretches follow at residues 464 to 483, 662 to 695, and 741 to 795; these read TPRA…KPNI, ESKS…PLLV, and GIGG…AGRR. The span at 467-477 shows a compositional bias: basic and acidic residues; the sequence is AEPEPKPEGEA. The span at 779 to 790 shows a compositional bias: acidic residues; that stretch reads DDDERDFGAADE.

Belongs to the DEAD box helicase family. DDX31/DBP7 subfamily.

The protein localises to the nucleus. The protein resides in the nucleolus. The enzyme catalyses ATP + H2O = ADP + phosphate + H(+). Functionally, ATP-binding RNA helicase involved in the biogenesis of 60S ribosomal subunits and is required for the normal formation of 25S and 5.8S rRNAs. The polypeptide is ATP-dependent RNA helicase dbp-7 (dbp-7) (Neurospora crassa (strain ATCC 24698 / 74-OR23-1A / CBS 708.71 / DSM 1257 / FGSC 987)).